The chain runs to 246 residues: Uroporphyrinogen-III synthase (246 aa).

Belongs to the uroporphyrinogen-III synthase family. In terms of assembly, monomer.

The enzyme catalyses hydroxymethylbilane = uroporphyrinogen III + H2O. The protein operates within porphyrin-containing compound metabolism; protoporphyrin-IX biosynthesis; coproporphyrinogen-III from 5-aminolevulinate: step 3/4. In terms of biological role, catalyzes cyclization of the linear tetrapyrrole, hydroxymethylbilane, to the macrocyclic uroporphyrinogen III. The protein is Uroporphyrinogen-III synthase (hemD) of Salmonella typhimurium (strain LT2 / SGSC1412 / ATCC 700720).